Reading from the N-terminus, the 50-residue chain is Large ribosomal subunit protein bL36B (50 aa).

Belongs to the bacterial ribosomal protein bL36 family.

This chain is Large ribosomal subunit protein bL36B, found in Pseudomonas aeruginosa (strain UCBPP-PA14).